The chain runs to 424 residues: UDP-N-acetylglucosamine 1-carboxyvinyltransferase (424 aa).

Residue 22 to 23 (KN) coordinates phosphoenolpyruvate. Residue arginine 93 coordinates UDP-N-acetyl-alpha-D-glucosamine. The Proton donor role is filled by cysteine 117. At cysteine 117 the chain carries 2-(S-cysteinyl)pyruvic acid O-phosphothioketal. UDP-N-acetyl-alpha-D-glucosamine-binding positions include 162-165 (KVSV), aspartate 307, and isoleucine 329.

Belongs to the EPSP synthase family. MurA subfamily.

Its subcellular location is the cytoplasm. It catalyses the reaction phosphoenolpyruvate + UDP-N-acetyl-alpha-D-glucosamine = UDP-N-acetyl-3-O-(1-carboxyvinyl)-alpha-D-glucosamine + phosphate. The protein operates within cell wall biogenesis; peptidoglycan biosynthesis. Functionally, cell wall formation. Adds enolpyruvyl to UDP-N-acetylglucosamine. The sequence is that of UDP-N-acetylglucosamine 1-carboxyvinyltransferase from Actinobacillus pleuropneumoniae serotype 7 (strain AP76).